We begin with the raw amino-acid sequence, 331 residues long: Tetraacyldisaccharide 4'-kinase (331 aa).

57–64 contacts ATP; that stretch reads SVGGNGKT.

It belongs to the LpxK family.

It carries out the reaction a lipid A disaccharide + ATP = a lipid IVA + ADP + H(+). The protein operates within glycolipid biosynthesis; lipid IV(A) biosynthesis; lipid IV(A) from (3R)-3-hydroxytetradecanoyl-[acyl-carrier-protein] and UDP-N-acetyl-alpha-D-glucosamine: step 6/6. Transfers the gamma-phosphate of ATP to the 4'-position of a tetraacyldisaccharide 1-phosphate intermediate (termed DS-1-P) to form tetraacyldisaccharide 1,4'-bis-phosphate (lipid IVA). This Histophilus somni (strain 2336) (Haemophilus somnus) protein is Tetraacyldisaccharide 4'-kinase.